Consider the following 1047-residue polypeptide: Atrial natriuretic peptide receptor 2 (1047 aa).

The first 16 residues, 1 to 16, serve as a signal peptide directing secretion; that stretch reads MALPSLLLVVAALAGG. Over 17-458 the chain is Extracellular; sequence VRPPGARNLT…DKTPLSTLAI (442 aa). Residues Asn24 and Asn35 are each glycosylated (N-linked (GlcNAc...) asparagine). Cys75 and Cys101 are disulfide-bonded. Residues Asn161, Asn195, Asn244, Asn277, and Asn349 are each glycosylated (N-linked (GlcNAc...) asparagine). Residues 459–478 form a helical membrane-spanning segment; the sequence is VALGTGITFIMFGVSSFLIF. Topologically, residues 479 to 1047 are cytoplasmic; it reads RKLMLEKELA…GERKGPPGLL (569 aa). Ser513 bears the Phosphoserine mark. Residues 513–786 form the Protein kinase domain; that stretch reads SRLTLSLRGS…PDFGQIKGFI (274 aa). Thr516 is modified (phosphothreonine). A phosphoserine mark is found at Ser518, Ser522, Ser523, and Ser526. Thr529 is modified (phosphothreonine). A Guanylate cyclase domain is found at 861–991; it reads TIYFSDIVGF…DTVNTASRME (131 aa).

Belongs to the adenylyl cyclase class-4/guanylyl cyclase family. Post-translationally, phosphorylated. Phosphorylation of the protein kinase-like domain is required for full activation by CNP. In terms of processing, glycosylated.

Its subcellular location is the cell membrane. It carries out the reaction GTP = 3',5'-cyclic GMP + diphosphate. Functionally, receptor for the C-type natriuretic peptide NPPC/CNP hormone. Has guanylate cyclase activity upon binding of its ligand. May play a role in the regulation of skeletal growth. The polypeptide is Atrial natriuretic peptide receptor 2 (Npr2) (Rattus norvegicus (Rat)).